An 805-amino-acid polypeptide reads, in one-letter code: Phenylalanine--tRNA ligase beta subunit (805 aa).

Residues 39 to 154 enclose the tRNA-binding domain; it reads SEGLKKVVVG…DDATPGDPVF (116 aa). In terms of domain architecture, B5 spans 410-485; the sequence is VQPTTVTIDL…RLYGYDNLPA (76 aa). Mg(2+) contacts are provided by Asp-463, Asp-469, Glu-472, and Glu-473. The FDX-ACB domain maps to 712-805; sequence SKFPSITRDV…LTDELGAEIR (94 aa).

Belongs to the phenylalanyl-tRNA synthetase beta subunit family. Type 1 subfamily. In terms of assembly, tetramer of two alpha and two beta subunits. Mg(2+) serves as cofactor.

Its subcellular location is the cytoplasm. The enzyme catalyses tRNA(Phe) + L-phenylalanine + ATP = L-phenylalanyl-tRNA(Phe) + AMP + diphosphate + H(+). The sequence is that of Phenylalanine--tRNA ligase beta subunit from Lactiplantibacillus plantarum (strain ATCC BAA-793 / NCIMB 8826 / WCFS1) (Lactobacillus plantarum).